The following is a 98-amino-acid chain: NADH-ubiquinone oxidoreductase chain 4L (98 aa).

Helical transmembrane passes span Met1–Val21, Ser29–Leu49, and Ile61–Val81.

This sequence belongs to the complex I subunit 4L family. In terms of assembly, core subunit of respiratory chain NADH dehydrogenase (Complex I) which is composed of 45 different subunits.

It localises to the mitochondrion inner membrane. The catalysed reaction is a ubiquinone + NADH + 5 H(+)(in) = a ubiquinol + NAD(+) + 4 H(+)(out). Core subunit of the mitochondrial membrane respiratory chain NADH dehydrogenase (Complex I) which catalyzes electron transfer from NADH through the respiratory chain, using ubiquinone as an electron acceptor. Part of the enzyme membrane arm which is embedded in the lipid bilayer and involved in proton translocation. The protein is NADH-ubiquinone oxidoreductase chain 4L (MT-ND4L) of Canis latrans (Coyote).